Consider the following 1841-residue polypeptide: Sodium channel protein type 4 subunit alpha (1841 aa).

Topologically, residues 1–131 are cytoplasmic; the sequence is MASSSLPTLV…RVAIKVLIHA (131 aa). A compositionally biased stretch (basic and acidic residues) spans 32-60; it reads AMEEEARLQRNKQMEIEEPERKPRSDLEA. Residues 32–63 are disordered; that stretch reads AMEEEARLQRNKQMEIEEPERKPRSDLEAGKN. One copy of the I repeat lies at 113–448; that stretch reads MLSPFSIVRR…VVAMAYAEQN (336 aa). A helical transmembrane segment spans residues 132–150; sequence LFSMFIMITILTNCVFMTM. Topologically, residues 151–157 are extracellular; it reads SNPPSWS. The chain crosses the membrane as a helical span at residues 158-178; that stretch reads KDVEYTFTGIYTFESLIKMLA. Over 179–192 the chain is Cytoplasmic; it reads RGFCIDDFTFLRDP. The chain crosses the membrane as a helical span at residues 193–210; sequence WNWLDFSVITMAYVTEFV. Residues 211 to 216 lie on the Extracellular side of the membrane; it reads DLGNIS. N-linked (GlcNAc...) asparagine glycosylation occurs at asparagine 214. Residues 217-233 traverse the membrane as a helical segment; sequence ALRTFRVLRALKTITVI. The Cytoplasmic segment spans residues 234–252; sequence PGLKTIVGALIQSVKKLSD. The helical transmembrane segment at 253-272 threads the bilayer; that stretch reads VMILTVFCLSVFALVGLQLF. Topologically, residues 273 to 385 are extracellular; that stretch reads MGNLRQKCVR…PNYGYTSYDT (113 aa). An intrachain disulfide couples cysteine 280 to cysteine 354. 7 N-linked (GlcNAc...) asparagine glycosylation sites follow: asparagine 288, asparagine 291, asparagine 297, asparagine 303, asparagine 315, asparagine 327, and asparagine 356. Residues cysteine 363 and cysteine 369 are joined by a disulfide bond. The pore-forming intramembrane region spans 386-410; the sequence is FSWAFLALFRLMTQDYWENLFQLTL. Over 411–417 the chain is Extracellular; sequence RAAGKTY. Residues 418–438 traverse the membrane as a helical segment; that stretch reads MIFFVVIIFLGSFYLINLILA. The Cytoplasmic portion of the chain corresponds to 439 to 572; it reads VVAMAYAEQN…HIILLIVMDP (134 aa). The disordered stretch occupies residues 484–522; the sequence is ALEGGEEADGDPTHSKDCNGSLDTSGEKGPPRPSCSAES. The stretch at 554-826 is one II repeat; the sequence is CCAPWVKFKH…QIAIGRIKWG (273 aa). A helical membrane pass occupies residues 573-591; sequence FVDLGITICIVLNTLFMAM. Topologically, residues 592–602 are extracellular; sequence EHYPMTEHFDN. Residues 603 to 622 traverse the membrane as a helical segment; the sequence is VLSVGNLVFTGIFTAEMVLK. Topologically, residues 623–636 are cytoplasmic; that stretch reads LIAMDPYEYFQQGW. The chain crosses the membrane as a helical span at residues 637 to 656; that stretch reads NIFDSFIVTLSLVELGLANV. Residues 657 to 658 are Extracellular-facing; the sequence is QG. A helical transmembrane segment spans residues 659 to 676; that stretch reads LSVLRSFRLLRVFKLAKS. Over 677 to 692 the chain is Cytoplasmic; that stretch reads WPTLNMLIKIIGNSVG. A helical transmembrane segment spans residues 693–711; the sequence is ALGNLTLVLAIIVFIFAVV. Residues 712-740 lie on the Extracellular side of the membrane; that stretch reads GMQLFGKSYKECVCKIASDCSLPRWHMHD. An intrachain disulfide couples cysteine 725 to cysteine 731. The pore-forming intramembrane region spans 741–761; the sequence is FFHSFLIVFRILCGEWIETMW. The Extracellular portion of the chain corresponds to 762 to 772; that stretch reads DCMEVAGQAMC. Cysteine 763 and cysteine 772 are joined by a disulfide. Residues 773-791 form a helical membrane-spanning segment; the sequence is LTVFLMVMVIGNLVVLNLF. The Cytoplasmic portion of the chain corresponds to 792-1026; sequence LALLLSSFSA…ACFKIVEHNW (235 aa). 2 disordered regions span residues 854 to 896 and 925 to 983; these read EPGG…LTDG and SDLE…EGEL. Positions 867–887 are enriched in basic and acidic residues; it reads EDEKKEPPPEDGNKELKDNHI. Acidic residues-rich tracts occupy residues 925–941 and 969–983; these read SDLEMPTEEETDTFSEP and EDPEEQAEENPEGEL. The stretch at 1007-1320 is one III repeat; that stretch reads RGKMWWTLRR…KKYYNAMKKL (314 aa). The helical transmembrane segment at 1027–1044 threads the bilayer; that stretch reads FETFIVFMILLSSGALAF. Topologically, residues 1045-1057 are extracellular; that stretch reads EDIYIEQRRVIRT. Residues 1058-1076 traverse the membrane as a helical segment; the sequence is ILEYADKVFTYIFILEMLL. The Cytoplasmic portion of the chain corresponds to 1077 to 1090; it reads KWVAYGFKVYFTNA. The chain crosses the membrane as a helical span at residues 1091 to 1109; it reads WCWLDFLIVDVSIISLVAN. Residues 1110–1117 lie on the Extracellular side of the membrane; sequence WLGYSELG. The chain crosses the membrane as a helical span at residues 1118 to 1136; that stretch reads PIKSLRTLRALRPLRALSR. At 1137–1153 the chain is on the cytoplasmic side; the sequence is FEGMRVVVNALLGAIPS. Residues 1154 to 1173 form a helical membrane-spanning segment; that stretch reads IMNVLLVCLIFWLIFSIMGV. The Extracellular segment spans residues 1174–1224; it reads NLFAGKFYYCINTTTSERFDISVVNNKSECESLMYTGQVRWMNVKVNYDNV. Cysteine 1183 and cysteine 1203 are oxidised to a cystine. Residues asparagine 1185 and asparagine 1199 are each glycosylated (N-linked (GlcNAc...) asparagine). Positions 1225–1246 form an intramembrane region, pore-forming; the sequence is GLGYLSLLQVATFKGWMDIMYA. The Extracellular segment spans residues 1247–1263; the sequence is AVDSREKEEQPDYEVNL. A helical transmembrane segment spans residues 1264 to 1285; it reads YMYLYFVIFIIFGSFFTLNLFI. Over 1286-1348 the chain is Cytoplasmic; sequence GVIIDNFNQQ…MVYDFVTKQV (63 aa). Residues 1304–1306 are important for rapid channel inactivation; sequence IFM. Residues 1329–1627 form an IV repeat; the sequence is IPRPQNKIQG…WEKFDPDATQ (299 aa). A helical membrane pass occupies residues 1349-1366; the sequence is FDISIMILICLNMVTMMV. At 1367 to 1377 the chain is on the extracellular side; it reads ETDDQSQLKVD. Residues 1378–1396 traverse the membrane as a helical segment; that stretch reads ILYNINMVFIIVFTGECVL. The Cytoplasmic portion of the chain corresponds to 1397–1408; sequence KMFALRHYYFTI. The chain crosses the membrane as a helical span at residues 1409–1426; sequence GWNIFDFVVVILSIVGLA. The Extracellular portion of the chain corresponds to 1427 to 1439; the sequence is LSDLIQKYFVSPT. Residues 1440–1456 traverse the membrane as a helical segment; that stretch reads LFRVIRLARIGRVLRLI. Over 1457–1475 the chain is Cytoplasmic; that stretch reads RGAKGIRTLLFALMMSLPA. The chain crosses the membrane as a helical span at residues 1476–1493; that stretch reads LFNIGLLLFLVMFIYSIF. The Extracellular segment spans residues 1494-1515; the sequence is GMSNFAYVKKESGIDDMFNFET. Positions 1516–1538 form an intramembrane region, pore-forming; that stretch reads FGNSIICLFEITTSAGWDGLLNP. The Extracellular segment spans residues 1539–1568; it reads ILNSGPPDCDPTLENPGTNIKGDCGNPSIG. Cysteine 1547 and cysteine 1562 are disulfide-bonded. Residues 1569–1591 form a helical membrane-spanning segment; it reads ICFFCSYIIISFLIVVNMYIAII. The Cytoplasmic segment spans residues 1592-1841; the sequence is LENFNVATEE…VRPGVKESLV (250 aa). The 30-residue stretch at 1721-1750 folds into the IQ domain; it reads EEVCAIKIQRAYRRHLLQRSVKQASYMYRH. Residues 1776–1794 show a composition bias toward basic and acidic residues; sequence SEKEDNGVQSQGEKEKDST. A disordered region spans residues 1776–1841; sequence SEKEDNGVQS…VRPGVKESLV (66 aa). Over residues 1801–1812 the composition is skewed to polar residues; the sequence is TEVTAPSSSDTA. A compositionally biased stretch (pro residues) spans 1814 to 1826; it reads TPPPPSPPPPSSP.

This sequence belongs to the sodium channel (TC 1.A.1.10) family. Nav1.4/SCN4A subfamily. In terms of assembly, the Nav1.4 voltage-gated sodium channel consists of an ion-conducting alpha subunit SCN4A which is functional on its own and a regulatory beta subunit SCN1B. SCN1B strongly enhances the presence of SCN4A at the cell surface. SCN1B is also required for rapid channel inactivation and recovery after inactivation. It prevents the decrease of channel activity in response to repetitive, high-frequency depolarizations. Interacts with the syntrophins SNTA1, SNTB1 and SNTB2 (via PDZ domain); probably links SCN4A to the actin cytoskeleton and the extracellular matrix via the dystrophin-associated protein complex and regulates its localization in muscle cells. Interacts with TMEM233; probable regulator of the channel. As to expression, detected in quadriceps muscle (at protein level). Detected in hind-limb skeletal muscles, but not in heart or brain. Detected at low levels in the myocardium. According to Pubme=26427606 detected also in brain.

The protein resides in the cell membrane. The catalysed reaction is Na(+)(in) = Na(+)(out). With respect to regulation, the channel is inhibited by tetrodotoxin. In terms of biological role, pore-forming subunit of Nav1.4, a voltage-gated sodium (Nav) channel that directly mediates the depolarizing phase of action potentials in excitable membranes. Navs, also called VGSCs (voltage-gated sodium channels) or VDSCs (voltage-dependent sodium channels), operate by switching between closed and open conformations depending on the voltage difference across the membrane. In the open conformation they allow Na(+) ions to selectively pass through the pore, along their electrochemical gradient. The influx of Na+ ions provokes membrane depolarization, initiating the propagation of electrical signals throughout cells and tissues. Highly expressed in skeletal muscles, Nav1.4 generates the action potential crucial for muscle contraction. This chain is Sodium channel protein type 4 subunit alpha, found in Mus musculus (Mouse).